The following is a 532-amino-acid chain: Flavin-containing monooxygenase 1 (532 aa).

Ala2 is subject to N-acetylalanine. At 2 to 510 the chain is on the lumenal side; sequence AKRVAIVGAG…TRIVQESPTP (509 aa). FAD contacts are provided by residues 9–13, Glu32, 40–41, and 61–62; these read GAGVS, LW, and NS. NADP(+) is bound by residues 60–61 and 195–198; these read SN and SGTD. The chain crosses the membrane as a helical span at residues 511-531; sequence FASLLKLLSLLALLMAIFLIF. Leu532 is a topological domain (cytoplasmic).

The protein belongs to the FMO family. FAD serves as cofactor. As to expression, liver.

It localises to the endoplasmic reticulum membrane. It carries out the reaction hypotaurine + NADPH + O2 + H(+) = taurine + NADP(+) + H2O. The catalysed reaction is hypotaurine + NADH + O2 + H(+) = taurine + NAD(+) + H2O. It catalyses the reaction trimethylamine + NADPH + O2 = trimethylamine N-oxide + NADP(+) + H2O. The enzyme catalyses N,N-dimethylaniline + NADPH + O2 + H(+) = N,N-dimethylaniline N-oxide + NADP(+) + H2O. Its function is as follows. Broad spectrum monooxygenase that catalyzes the oxygenation of a wide variety of nitrogen- and sulfur-containing compounds including xenobiotics. Catalyzes the S-oxygenation of hypotaurine to produce taurine, an organic osmolyte involved in cell volume regulation as well as a variety of cytoprotective and developmental processes. In vitro, catalyzes the N-oxygenation of trimethylamine (TMA) to produce trimethylamine N-oxide (TMAO) and could therefore participate to the detoxification of this compound that is generated by the action of gut microbiota from dietary precursors such as choline, choline containing compounds, betaine or L-carnitine. This Canis lupus familiaris (Dog) protein is Flavin-containing monooxygenase 1 (FMO1).